A 94-amino-acid chain; its full sequence is Large ribosomal subunit protein uL23 (94 aa).

The protein belongs to the universal ribosomal protein uL23 family. Part of the 50S ribosomal subunit. Contacts protein L29, and trigger factor when it is bound to the ribosome.

Functionally, one of the early assembly proteins it binds 23S rRNA. One of the proteins that surrounds the polypeptide exit tunnel on the outside of the ribosome. Forms the main docking site for trigger factor binding to the ribosome. This is Large ribosomal subunit protein uL23 from Latilactobacillus sakei subsp. sakei (strain 23K) (Lactobacillus sakei subsp. sakei).